The following is a 111-amino-acid chain: Ribonuclease P protein component (111 aa).

Belongs to the RnpA family. Consists of a catalytic RNA component (M1 or rnpB) and a protein subunit.

The catalysed reaction is Endonucleolytic cleavage of RNA, removing 5'-extranucleotides from tRNA precursor.. RNaseP catalyzes the removal of the 5'-leader sequence from pre-tRNA to produce the mature 5'-terminus. It can also cleave other RNA substrates such as 4.5S RNA. The protein component plays an auxiliary but essential role in vivo by binding to the 5'-leader sequence and broadening the substrate specificity of the ribozyme. The polypeptide is Ribonuclease P protein component (Clostridium botulinum (strain 657 / Type Ba4)).